We begin with the raw amino-acid sequence, 456 residues long: Adenylosuccinate synthetase (456 aa).

GTP-binding positions include 11–17 (GDEGKGG) and 39–41 (GHT). The active-site Proton acceptor is aspartate 12. The Mg(2+) site is built by aspartate 12 and glycine 39. Residues 12–15 (DEGK), 37–40 (NAGH), threonine 127, arginine 141, glutamine 232, threonine 247, and arginine 328 contribute to the IMP site. Histidine 40 acts as the Proton donor in catalysis. 324–330 (TVTGRPR) contacts substrate. GTP contacts are provided by residues arginine 330, 356–358 (HLD), and 441–443 (GVG).

The protein belongs to the adenylosuccinate synthetase family. Homodimer. It depends on Mg(2+) as a cofactor.

The protein resides in the cytoplasm. It carries out the reaction IMP + L-aspartate + GTP = N(6)-(1,2-dicarboxyethyl)-AMP + GDP + phosphate + 2 H(+). It participates in purine metabolism; AMP biosynthesis via de novo pathway; AMP from IMP: step 1/2. Its function is as follows. Plays an important role in the de novo pathway of purine nucleotide biosynthesis. Catalyzes the first committed step in the biosynthesis of AMP from IMP. In Natronomonas pharaonis (strain ATCC 35678 / DSM 2160 / CIP 103997 / JCM 8858 / NBRC 14720 / NCIMB 2260 / Gabara) (Halobacterium pharaonis), this protein is Adenylosuccinate synthetase.